Consider the following 220-residue polypeptide: Glutathione S-transferase (220 aa).

In terms of domain architecture, GST N-terminal spans 1–77 (MLKLHGFSVS…YIEQTQSGKA (77 aa)). Residues tyrosine 12, valine 49, and 61–62 (ET) contribute to the glutathione site. The region spanning 82-211 (DPFEQAKVRE…ADKEASMPAF (130 aa)) is the GST C-terminal domain.

It belongs to the GST superfamily. As to quaternary structure, monomer and homodimer.

It localises to the cytoplasm. It catalyses the reaction RX + glutathione = an S-substituted glutathione + a halide anion + H(+). In terms of biological role, conjugation of reduced glutathione to a wide number of exogenous and endogenous hydrophobic electrophiles. The chain is Glutathione S-transferase from Pseudomonas putida (strain ATCC 700007 / DSM 6899 / JCM 31910 / BCRC 17059 / LMG 24140 / F1).